The chain runs to 118 residues: Ribonuclease P protein component (118 aa).

It belongs to the RnpA family. In terms of assembly, consists of a catalytic RNA component (M1 or rnpB) and a protein subunit.

It carries out the reaction Endonucleolytic cleavage of RNA, removing 5'-extranucleotides from tRNA precursor.. In terms of biological role, RNaseP catalyzes the removal of the 5'-leader sequence from pre-tRNA to produce the mature 5'-terminus. It can also cleave other RNA substrates such as 4.5S RNA. The protein component plays an auxiliary but essential role in vivo by binding to the 5'-leader sequence and broadening the substrate specificity of the ribozyme. The polypeptide is Ribonuclease P protein component (Shewanella amazonensis (strain ATCC BAA-1098 / SB2B)).